The chain runs to 530 residues: MLVSSNVTMQFGSKPLFENISVKFGGGNRYGLIGANGSGKSTFMKILGGDLEPTLGNVSLDPNERIGKLRQDQFAFEEFTVLDTVIMGHKELWEVKQERDRIYALPEMSEEDGYKVADLEVKYGEMDGYSAEARAGELLLGVGIPVEQHYGPMSEVAPGWKLRVLLAQALFADPDILLLDEPTNNLDIDTIRWLEQVLNERDSTMIIISHDRHFLNMVCTHMADLDYGELRVYPGNYDEYMTAATQARERLLADNAKKKAQIAELQSFVSRFSANASKSRQATSRARQIDKIKLEEVKASSRQNPFIRFEQDKKLFRNALEVEGLTKGFDNGPLFKNLNLLLEVGEKLAVLGTNGVGKSTLLKTLVGDLQPDSGTVKWSENARIGYYAQDHEYEFENDLTVFEWMSQWKQEGDDEQAVRSILGRLLFSQDDIKKPAKVLSGGEKGRMLFGKLMMQKPNILIMDEPTNHLDMESIESLNMALELYQGTLIFVSHDREFVSSLATRILEITPERVIDFSGNYEDYLRSKGIE.

ABC transporter domains are found at residues 2 to 252 (LVSS…ERLL) and 320 to 526 (LEVE…YLRS). Residues 34-41 (GANGSGKS) and 352-359 (GTNGVGKS) contribute to the ATP site.

It belongs to the ABC transporter superfamily. ABCF family. YbiT subfamily.

The sequence is that of Probable ATP-binding protein YbiT (ybiT) from Escherichia coli O157:H7.